The chain runs to 397 residues: Elongation factor Tu (397 aa).

One can recognise a tr-type G domain in the interval 10-207; sequence KPHVNVGTIG…TLDAYIPEPE (198 aa). The tract at residues 19 to 26 is G1; that stretch reads GHVDHGKT. 19 to 26 provides a ligand contact to GTP; sequence GHVDHGKT. Thr26 lines the Mg(2+) pocket. The tract at residues 60-64 is G2; sequence GITIA. Residues 81–84 are G3; that stretch reads DCPG. GTP contacts are provided by residues 81-85 and 136-139; these read DCPGH and NKAD. A G4 region spans residues 136–139; sequence NKAD. Residues 174–176 form a G5 region; the sequence is SAL.

It belongs to the TRAFAC class translation factor GTPase superfamily. Classic translation factor GTPase family. EF-Tu/EF-1A subfamily. As to quaternary structure, monomer.

It is found in the cytoplasm. It catalyses the reaction GTP + H2O = GDP + phosphate + H(+). Functionally, GTP hydrolase that promotes the GTP-dependent binding of aminoacyl-tRNA to the A-site of ribosomes during protein biosynthesis. This is Elongation factor Tu from Hahella chejuensis (strain KCTC 2396).